The sequence spans 424 residues: Gamma-glutamyl phosphate reductase (424 aa).

The protein belongs to the gamma-glutamyl phosphate reductase family.

The protein resides in the cytoplasm. The enzyme catalyses L-glutamate 5-semialdehyde + phosphate + NADP(+) = L-glutamyl 5-phosphate + NADPH + H(+). Its pathway is amino-acid biosynthesis; L-proline biosynthesis; L-glutamate 5-semialdehyde from L-glutamate: step 2/2. Functionally, catalyzes the NADPH-dependent reduction of L-glutamate 5-phosphate into L-glutamate 5-semialdehyde and phosphate. The product spontaneously undergoes cyclization to form 1-pyrroline-5-carboxylate. This is Gamma-glutamyl phosphate reductase from Dehalococcoides mccartyi (strain ATCC BAA-2266 / KCTC 15142 / 195) (Dehalococcoides ethenogenes (strain 195)).